A 545-amino-acid chain; its full sequence is MADQQTLDSSTPPPTQSDDLSHSHSTSSTTSASSSSDPSLLRSLSLSRLNAGAPEFVPGRTTPPLPQPPRMIIPPPPPHGMLHMYHHQPPFNTPVLGPVPIQPHLVPVQNHHPHHRFHQHHHHNRHQNQQYVPVRNHGEYQQRGGVGGEQEPDLVSKKNDRRDHSKRESKNDQVTETGASVSIDSKTGLPEDSIQKIVNQVEYYFSDLNLATTDHLMRFICKDPEGYVPIHVVASFKKIKAVINNNSQLAAVLQNSAKLFVSEDGKKVRRISPITESAIEELQSRIIVAENLPEDHCYQNLMKIFSTVGSVKNIRTCQPQNNGSGAPPAARSAAKSDGTLFSNKVHAFVEYEIVELAERAVTELSEAGNWRSGLKVRLMLKHQTKEPKQGQGRGRKGHDADVEHEEDDATTSEQQPIEKQSDDCSGEWDTHMQEQPIGEDQGNEKAAGQRKGRNRGRGKGRGRGQPHQNQNQNNNHSHNQNHNHNGRGNHHHHHHHQVGTQPSNNPMNNMEQPGMGKQQPPGPRMPDGTRGFSMGRGKPVMVQAE.

Over residues 1–10 (MADQQTLDSS) the composition is skewed to polar residues. 3 disordered regions span residues 1-76 (MADQ…IPPP), 105-187 (LVPV…DSKT), and 382-545 (HQTK…VQAE). The segment covering 23-49 (SHSTSSTTSASSSSDPSLLRSLSLSRL) has biased composition (low complexity). Pro residues predominate over residues 61–76 (TTPPLPQPPRMIIPPP). The span at 111–126 (HHPHHRFHQHHHHNRH) shows a compositional bias: basic residues. The segment covering 154-173 (LVSKKNDRRDHSKRESKNDQ) has biased composition (basic and acidic residues). Residues 174-185 (VTETGASVSIDS) show a composition bias toward polar residues. An HTH La-type RNA-binding domain is found at 187 to 278 (TGLPEDSIQK…RRISPITESA (92 aa)). Residues 285–383 (RIIVAENLPE…LKVRLMLKHQ (99 aa)) form the RRM domain. The span at 448-464 (GQRKGRNRGRGKGRGRG) shows a compositional bias: basic residues. Residues 465–478 (QPHQNQNQNNNHSH) show a composition bias toward low complexity. Over residues 479–497 (NQNHNHNGRGNHHHHHHHQ) the composition is skewed to basic residues. Residues 498–509 (VGTQPSNNPMNN) are compositionally biased toward polar residues. Low complexity predominate over residues 510–519 (MEQPGMGKQQ).

The protein localises to the nucleus. Transcriptional regulator. This chain is La-related protein 6B (LARP6B), found in Arabidopsis thaliana (Mouse-ear cress).